We begin with the raw amino-acid sequence, 253 residues long: Triosephosphate isomerase (253 aa).

A substrate-binding site is contributed by 8–10; sequence NWK. His93 functions as the Electrophile in the catalytic mechanism. Residue Glu165 is the Proton acceptor of the active site. Residues Gly171, Ser210, and 231-232 contribute to the substrate site; that span reads GG.

Belongs to the triosephosphate isomerase family. As to quaternary structure, homodimer.

The protein localises to the cytoplasm. It catalyses the reaction D-glyceraldehyde 3-phosphate = dihydroxyacetone phosphate. It functions in the pathway carbohydrate biosynthesis; gluconeogenesis. The protein operates within carbohydrate degradation; glycolysis; D-glyceraldehyde 3-phosphate from glycerone phosphate: step 1/1. In terms of biological role, involved in the gluconeogenesis. Catalyzes stereospecifically the conversion of dihydroxyacetone phosphate (DHAP) to D-glyceraldehyde-3-phosphate (G3P). This is Triosephosphate isomerase from Francisella tularensis subsp. mediasiatica (strain FSC147).